We begin with the raw amino-acid sequence, 1018 residues long: D-2-hydroxyglutarate dehydrogenase (1018 aa).

The FAD-binding PCMH-type domain maps to 48 to 281; that stretch reads YQLLPDAVVF…TEARLDITRL (234 aa). (R)-2-hydroxyglutarate-binding residues include arginine 402 and histidine 500. A 4Fe-4S ferredoxin-type domain is found at 662–695; it reads FSHEVKEAMSGCLACKACSTQCPIKIDVPEFRSR. [4Fe-4S] cluster is bound by residues cysteine 673, cysteine 676, cysteine 679, and cysteine 683.

In the N-terminal section; belongs to the FAD-binding oxidoreductase/transferase type 4 family. In terms of assembly, homotetramer. It depends on [4Fe-4S] cluster as a cofactor. The cofactor is FAD.

It catalyses the reaction (R)-2-hydroxyglutarate + A = 2-oxoglutarate + AH2. Activity is completely inhibited by the addition of 0.5 mM Mn(2+), Ni(2+), or Co(2+) and partially inhibited by 0.5 mM Zn(2+). Catalyzes the oxidation of D-2-hydroxyglutarate (D-2-HGA) to 2-oxoglutarate. Appears to be the only D2HGDH in E.coli, providing the way to recycle D-2-HGA produced during L-serine synthesis by SerA, by converting it back to 2-oxoglutarate. The physiological molecule that functions as the primary electron acceptor during D-2-HGA oxidation by YdiJ in E.coli is unknown. Shows strict substrate specificity towards D-2-HGA, since it has no detectable activity on L-2-hydroxyglutarate, L-malate, D-malate, L-lactate, D-lactate, L-tartrate, D-tartrate, L-glycerate, D-glycerate, glutarate, or pyruvate. The sequence is that of D-2-hydroxyglutarate dehydrogenase (ydiJ) from Escherichia coli (strain K12).